Reading from the N-terminus, the 840-residue chain is Origin recognition complex subunit 1 (840 aa).

One can recognise a BAH domain in the interval 44–170; the sequence is IHIKVGQFVL…KKDFAPLPPE (127 aa). Disordered regions lie at residues 195 to 218 and 242 to 301; these read VKSP…STSK and FTRK…KNGQ. A phosphoserine mark is found at Ser-197, Ser-255, Ser-258, Ser-276, Ser-291, and Ser-332. The segment covering 392 to 414 has biased composition (acidic residues); that stretch reads DGDDRDQEEEESVDSESEEEDEF. The disordered stretch occupies residues 392 to 456; that stretch reads DGDDRDQEEE…HRATPQIRDR (65 aa). Residues 418-439 show a composition bias toward polar residues; the sequence is LPTRNSLGQSRTRQTPSKSPQK. ATP contacts are provided by residues Val-479 and 513–521; that span reads GVPGTGKTA. The interval 480–840 is necessary and sufficient for ORC complex assembly; that stretch reads PDSLPCREQE…NDVLFALKEE (361 aa). Positions 599 and 600 each coordinate Mg(2+). Residues Glu-600, Asn-633, and Arg-699 each contribute to the ATP site.

The protein belongs to the ORC1 family. Component of ORC, a complex composed of at least 6 subunits: ORC1, ORC2, ORC3, ORC4, ORC5 and ORC6. ORC is regulated in a cell-cycle dependent manner. It is sequentially assembled at the exit from anaphase of mitosis and disassembled as cells enter S phase. Interacts with CDC6 and KAT7/HBO1. Interacts with LRWD1 predominantly during the G1 phase and with less affinity during mitosis, when phosphorylated. Post-translationally, phosphorylated during mitosis.

The protein resides in the nucleus. Functionally, component of the origin recognition complex (ORC) that binds origins of replication. DNA-binding is ATP-dependent. The specific DNA sequences that define origins of replication have not been identified yet. ORC is required to assemble the pre-replication complex necessary to initiate DNA replication. This chain is Origin recognition complex subunit 1 (Orc1), found in Mus musculus (Mouse).